We begin with the raw amino-acid sequence, 61 residues long: UPF0391 membrane protein Pnap_0032 (61 aa).

Transmembrane regions (helical) follow at residues 5 to 25 (AIIFAVISLIAGALGFSGVAA) and 33 to 53 (VLFGLFLILAVIFIVLAALGV).

This sequence belongs to the UPF0391 family.

It is found in the cell membrane. In Polaromonas naphthalenivorans (strain CJ2), this protein is UPF0391 membrane protein Pnap_0032.